The following is a 349-amino-acid chain: Sexual stage-specific protein G37 (349 aa).

The N-terminal stretch at 1–18 (MKLYLVTFLFFVIYKNKT) is a signal peptide. Over 19 to 91 (FVDCVTKKQD…INQVSNNIMR (73 aa)) the chain is Extracellular. The helical transmembrane segment at 92 to 112 (VYISLLSLFLFPYFSYIGIFG) threads the bilayer. The Cytoplasmic portion of the chain corresponds to 113–117 (HSRNK). The helical transmembrane segment at 118–138 (ANLTLSSLLAYFALLVSFFLF) threads the bilayer. Over 139 to 140 (NG) the chain is Extracellular. The helical transmembrane segment at 141 to 161 (ILNIGFVTSLPLVVAVLIFIL) threads the bilayer. The Cytoplasmic portion of the chain corresponds to 162–176 (GVSDCEINFLYKYTR). A helical membrane pass occupies residues 177–197 (YIFCFIISKLIYDVVTYISKD). At 198–218 (GANIFDYGFSGHIYMNLLRGK) the chain is on the extracellular side. A helical membrane pass occupies residues 219 to 239 (YYIVLKLIHLIILSLISLIII). The Cytoplasmic segment spans residues 240 to 262 (KICPKIFSNNHLKSPISITFDKY). Residues 263-283 (IISFLCSLPIATAISQVFYLL) form a helical membrane-spanning segment. The Extracellular segment spans residues 284 to 305 (SKTINPIDPSIFFMIPSSINFS). Residues 306–326 (STGTIFSLSIWILMSYLMTFL) traverse the membrane as a helical segment. At 327–349 (RNKVEADFNNILNKIPNNLPDFI) the chain is on the cytoplasmic side.

It is found in the cell membrane. Involved in the development of male gametocytes. This is Sexual stage-specific protein G37 from Plasmodium berghei (strain Anka).